A 504-amino-acid polypeptide reads, in one-letter code: Maturase K (504 aa).

The protein belongs to the intron maturase 2 family. MatK subfamily.

It is found in the plastid. It localises to the chloroplast. In terms of biological role, usually encoded in the trnK tRNA gene intron. Probably assists in splicing its own and other chloroplast group II introns. This is Maturase K from Actinidia chinensis (Kiwi).